The sequence spans 912 residues: Rho guanine nucleotide exchange factor 1 (912 aa).

Positions 41 to 232 (EQNSQFQSLE…GLYMRHLGVR (192 aa)) constitute an RGSL domain. The segment at 248–413 (KVMGNRRSDE…PDTLHSLPKS (166 aa)) is disordered. The segment covering 283 to 313 (DFRHLKAEVDAEKPGATDRKGGVGMPSRDRN) has biased composition (basic and acidic residues). The span at 365-381 (STDEGAETESPEPGDEG) shows a compositional bias: acidic residues. 2 positions are modified to phosphoserine: S374 and S409. Residues 416-605 (KRQEVISELL…REILHHVNQA (190 aa)) enclose the DH domain. Residues 647-760 (KLVHEGPLTW…WCALITETAG (114 aa)) enclose the PH domain. The residue at position 695 (T695) is a Phosphothreonine. Y738 is subject to Phosphotyrosine; by JAK2. Disordered stretches follow at residues 763 to 802 (KVPA…PADA) and 841 to 865 (AEED…LSPA). The span at 777-789 (PSSTREPLLSSSE) shows a compositional bias: low complexity. A Phosphoserine modification is found at S863. A coiled-coil region spans residues 865–896 (ARTQEIQENLLSLEETMKQLEELEEEFCRLRP).

In terms of assembly, interacts with RHOA, GNA12 and GNA13. Homooligomerizes through the coiled coil region. May interact with CCPG1. Interacts with CTNNAL1. In terms of processing, phosphorylated by PKCA. Angiotensin-2 induced Tyr-738 phosphorylation is mediated by JAK2. Ubiquitously expressed.

Its subcellular location is the cytoplasm. It is found in the membrane. Functionally, seems to play a role in the regulation of RhoA GTPase by guanine nucleotide-binding alpha-12 (GNA12) and alpha-13 (GNA13) subunits. Acts as a GTPase-activating protein (GAP) for GNA12 and GNA13, and as guanine nucleotide exchange factor (GEF) for RhoA GTPase. Activated G alpha 13/GNA13 stimulates the RhoGEF activity through interaction with the RGS-like domain. This GEF activity is inhibited by binding to activated GNA12. Mediates angiotensin-2-induced RhoA activation. In lymphoid follicles, may trigger activation of GNA13 as part of S1PR2-dependent signaling pathway that leads to inhibition of germinal center (GC) B cell growth and migration outside the GC niche. The polypeptide is Rho guanine nucleotide exchange factor 1 (ARHGEF1) (Homo sapiens (Human)).